A 328-amino-acid polypeptide reads, in one-letter code: 6-phosphogluconolactonase (328 aa).

The protein belongs to the cycloisomerase 2 family.

The enzyme catalyses 6-phospho-D-glucono-1,5-lactone + H2O = 6-phospho-D-gluconate + H(+). It functions in the pathway carbohydrate degradation; pentose phosphate pathway; D-ribulose 5-phosphate from D-glucose 6-phosphate (oxidative stage): step 2/3. Its function is as follows. Catalyzes the hydrolysis of 6-phosphogluconolactone to 6-phosphogluconate. The protein is 6-phosphogluconolactonase of Photorhabdus laumondii subsp. laumondii (strain DSM 15139 / CIP 105565 / TT01) (Photorhabdus luminescens subsp. laumondii).